An 870-amino-acid chain; its full sequence is Leucine--tRNA ligase (870 aa).

Positions 43-53 (PYPSGRIHMGH) match the 'HIGH' region motif. Residues 630 to 634 (KMSKS) carry the 'KMSKS' region motif. Residue Lys633 coordinates ATP.

Belongs to the class-I aminoacyl-tRNA synthetase family.

The protein localises to the cytoplasm. It catalyses the reaction tRNA(Leu) + L-leucine + ATP = L-leucyl-tRNA(Leu) + AMP + diphosphate. This chain is Leucine--tRNA ligase, found in Parvibaculum lavamentivorans (strain DS-1 / DSM 13023 / NCIMB 13966).